Consider the following 343-residue polypeptide: Methionine import ATP-binding protein MetN 1 (343 aa).

In terms of domain architecture, ABC transporter spans 2–241 (IKLSNITKVF…PKTPLAQKFI (240 aa)). 38 to 45 (GASGAGKS) contacts ATP.

The protein belongs to the ABC transporter superfamily. Methionine importer (TC 3.A.1.24) family. In terms of assembly, the complex is composed of two ATP-binding proteins (MetN), two transmembrane proteins (MetI) and a solute-binding protein (MetQ).

It is found in the cell inner membrane. The catalysed reaction is L-methionine(out) + ATP + H2O = L-methionine(in) + ADP + phosphate + H(+). It carries out the reaction D-methionine(out) + ATP + H2O = D-methionine(in) + ADP + phosphate + H(+). In terms of biological role, part of the ABC transporter complex MetNIQ involved in methionine import. Responsible for energy coupling to the transport system. This Salmonella typhi protein is Methionine import ATP-binding protein MetN 1.